We begin with the raw amino-acid sequence, 361 residues long: Phosphate acyltransferase (361 aa).

The tract at residues 342–361 is disordered; that stretch reads ADGAAAEQGPTPRRTAPRQT.

Belongs to the PlsX family. As to quaternary structure, homodimer. Probably interacts with PlsY.

The protein localises to the cytoplasm. The enzyme catalyses a fatty acyl-[ACP] + phosphate = an acyl phosphate + holo-[ACP]. It participates in lipid metabolism; phospholipid metabolism. Functionally, catalyzes the reversible formation of acyl-phosphate (acyl-PO(4)) from acyl-[acyl-carrier-protein] (acyl-ACP). This enzyme utilizes acyl-ACP as fatty acyl donor, but not acyl-CoA. This is Phosphate acyltransferase from Anaeromyxobacter sp. (strain K).